Consider the following 510-residue polypeptide: GTPase Der (510 aa).

2 EngA-type G domains span residues 3–166 (PVVA…ATAL) and 220–393 (IKIA…ACAT). GTP is bound by residues 9 to 16 (GRPNVGKS), 56 to 60 (DTGGI), 118 to 121 (NKTD), 226 to 233 (GRPNVGKS), 273 to 277 (DTAGV), and 338 to 341 (NKWD). The region spanning 394–478 (QKTSTSMLTR…PIRIQFQEGN (85 aa)) is the KH-like domain.

This sequence belongs to the TRAFAC class TrmE-Era-EngA-EngB-Septin-like GTPase superfamily. EngA (Der) GTPase family. As to quaternary structure, associates with the 50S ribosomal subunit.

In terms of biological role, GTPase that plays an essential role in the late steps of ribosome biogenesis. The chain is GTPase Der from Haemophilus ducreyi (strain 35000HP / ATCC 700724).